We begin with the raw amino-acid sequence, 124 residues long: Glycine cleavage system H protein (124 aa).

A Lipoyl-binding domain is found at 22–103 (VFVVGITDNA…AYTAWIFKIK (82 aa)). K63 bears the N6-lipoyllysine mark.

It belongs to the GcvH family. As to quaternary structure, the glycine cleavage system is composed of four proteins: P, T, L and H. The cofactor is (R)-lipoate.

Its function is as follows. The glycine cleavage system catalyzes the degradation of glycine. The H protein shuttles the methylamine group of glycine from the P protein to the T protein. This is Glycine cleavage system H protein from Bordetella pertussis (strain Tohama I / ATCC BAA-589 / NCTC 13251).